The chain runs to 180 residues: Insulin-like growth factor 2 (180 aa).

The first 24 residues, 1 to 24, serve as a signal peptide directing secretion; the sequence is MGIPVGKSMLVLLISLAFALCCIA. The b stretch occupies residues 25–52; the sequence is AYGPGETLCGGELVDTLQFVCSDRGFYF. Cystine bridges form between Cys33-Cys71, Cys45-Cys84, and Cys70-Cys75. Positions 53–64 are c; sequence SRPSSRANRRSR. The interval 65–85 is a; it reads GIVEECCFRSCDLALLETYCA. Positions 86–91 are d; that stretch reads TPAKSE. The propeptide at 92–180 is e peptide; it reads RDVSTSQAVL…ASSEMSSNHQ (89 aa). The interval 157–180 is disordered; sequence PLIVLPPKDPAHGGASSEMSSNHQ.

This sequence belongs to the insulin family. As to quaternary structure, interacts with MYORG; this interaction is required for IGF2 secretion. Interacts with integrins ITGAV:ITGB3 and ITGA6:ITGB4; integrin-binding is required for IGF2 signaling. Interacts with IGFBP2. Post-translationally, proteolytically processed by PCSK4, proIGF2 is cleaved at Arg-128 and Arg-92 to generate big-IGF2 and mature IGF2. Expressed in the heart, blood serum, kidney and skeletal muscle including the tibialis anterior muscle.

It is found in the secreted. In terms of biological role, the insulin-like growth factors possess growth-promoting activity. Major fetal growth hormone in mammals. Plays a key role in regulating fetoplacental development. IGF2 is influenced by placental lactogen. Also involved in tissue differentiation. In adults, involved in glucose metabolism in adipose tissue, skeletal muscle and liver. Acts as a ligand for integrin which is required for IGF2 signaling. Positively regulates myogenic transcription factor MYOD1 function by facilitating the recruitment of transcriptional coactivators, thereby controlling muscle terminal differentiation. Inhibits myoblast differentiation and modulates metabolism via increasing the mitochondrial respiration rate. Its function is as follows. Preptin undergoes glucose-mediated co-secretion with insulin, and acts as a physiological amplifier of glucose-mediated insulin secretion. Exhibits osteogenic properties by increasing osteoblast mitogenic activity through phosphoactivation of MAPK1 and MAPK3. This is Insulin-like growth factor 2 from Mus musculus (Mouse).